The following is a 186-amino-acid chain: Peptidyl-tRNA hydrolase (186 aa).

Y14 provides a ligand contact to tRNA. The active-site Proton acceptor is H19. Residues F64, N66, and N112 each coordinate tRNA.

This sequence belongs to the PTH family. As to quaternary structure, monomer.

The protein localises to the cytoplasm. The catalysed reaction is an N-acyl-L-alpha-aminoacyl-tRNA + H2O = an N-acyl-L-amino acid + a tRNA + H(+). Functionally, hydrolyzes ribosome-free peptidyl-tRNAs (with 1 or more amino acids incorporated), which drop off the ribosome during protein synthesis, or as a result of ribosome stalling. Its function is as follows. Catalyzes the release of premature peptidyl moieties from peptidyl-tRNA molecules trapped in stalled 50S ribosomal subunits, and thus maintains levels of free tRNAs and 50S ribosomes. The sequence is that of Peptidyl-tRNA hydrolase from Mycoplasma capricolum subsp. capricolum (strain California kid / ATCC 27343 / NCTC 10154).